A 107-amino-acid chain; its full sequence is Parvalbumin beta (107 aa).

N-acetylserine is present on S1. 2 consecutive EF-hand domains span residues 37–72 (KSLD…FSPS) and 76–107 (LTDA…MIKA). 11 residues coordinate Ca(2+): D50, D52, S54, F56, E58, E61, D89, D91, D93, M95, and E100.

This sequence belongs to the parvalbumin family.

Its function is as follows. In muscle, parvalbumin is thought to be involved in relaxation after contraction. It binds two calcium ions. The sequence is that of Parvalbumin beta from Esox lucius (Northern pike).